A 177-amino-acid polypeptide reads, in one-letter code: Large ribosomal subunit protein uL6 (177 aa).

This sequence belongs to the universal ribosomal protein uL6 family. In terms of assembly, part of the 50S ribosomal subunit.

Functionally, this protein binds to the 23S rRNA, and is important in its secondary structure. It is located near the subunit interface in the base of the L7/L12 stalk, and near the tRNA binding site of the peptidyltransferase center. This is Large ribosomal subunit protein uL6 from Tolumonas auensis (strain DSM 9187 / NBRC 110442 / TA 4).